We begin with the raw amino-acid sequence, 67 residues long: Large ribosomal subunit protein bL35 (67 aa).

The interval 1-20 (MPKLKTKSGAKKRFVPKKSG) is disordered.

This sequence belongs to the bacterial ribosomal protein bL35 family.

This chain is Large ribosomal subunit protein bL35, found in Anaeromyxobacter dehalogenans (strain 2CP-C).